Here is a 512-residue protein sequence, read N- to C-terminus: Respiratory nitrate reductase 1 beta chain (512 aa).

4Fe-4S ferredoxin-type domains follow at residues 7–35, 175–206, and 208–237; these read VGMV…SREG, TFMM…KREE, and GIVL…FNWK. 7 residues coordinate [4Fe-4S] cluster: Cys-16, Cys-19, Cys-22, Cys-26, Cys-184, Cys-187, and Cys-192. Residues Cys-196, Cys-217, and Cys-223 each coordinate [3Fe-4S] cluster. Residues Cys-227, Cys-244, Cys-247, Cys-259, and Cys-263 each coordinate [4Fe-4S] cluster.

Dimer of heterotrimers each composed of an alpha, a beta and a gamma chain. Alpha and beta are catalytic chains; gamma chains are involved in binding the enzyme complex to the cytoplasmic membrane. Requires [4Fe-4S] cluster as cofactor. [3Fe-4S] cluster serves as cofactor.

The protein localises to the cell membrane. It carries out the reaction nitrate + a quinol = a quinone + nitrite + H2O. Its function is as follows. The nitrate reductase enzyme complex allows E.coli to use nitrate as an electron acceptor during anaerobic growth. The beta chain is an electron transfer unit containing four cysteine clusters involved in the formation of iron-sulfur centers. Electrons are transferred from the gamma chain to the molybdenum cofactor of the alpha subunit. In Escherichia coli (strain K12), this protein is Respiratory nitrate reductase 1 beta chain (narH).